We begin with the raw amino-acid sequence, 55 residues long: ATP synthase small subunit 6-A, mitochondrial (55 aa).

Residues 1–11 constitute a mitochondrion transit peptide; sequence MRLFDPWPVFF. A helical membrane pass occupies residues 21 to 39; it reads FLTGFAVTGVLITKLTAGL.

It belongs to the ATPase 6 subunit family.

The protein localises to the mitochondrion inner membrane. In terms of biological role, mitochondrial membrane ATP synthase (F(1)F(0) ATP synthase or Complex V) produces ATP from ADP in the presence of a proton gradient across the membrane which is generated by electron transport complexes of the respiratory chain. F-type ATPases consist of two structural domains, F(1) - containing the extramembraneous catalytic core and F(0) - containing the membrane proton channel, linked together by a central stalk and a peripheral stalk. During catalysis, ATP synthesis in the catalytic domain of F(1) is coupled via a rotary mechanism of the central stalk subunits to proton translocation. Part of the complex F(0) domain. Confers tolerance to several abiotic stresses (e.g. salt, mannitol, drought, oxidative and cold stresses), probably by providing additional energy needed for cell homeostasis. This is ATP synthase small subunit 6-A, mitochondrial from Arabidopsis thaliana (Mouse-ear cress).